Here is a 372-residue protein sequence, read N- to C-terminus: L-lysine 4-hydroxylase (372 aa).

Fe cation-binding residues include histidine 176, glutamate 178, and histidine 312.

Belongs to the clavaminate synthase family. The cofactor is Fe(2+).

It carries out the reaction L-lysine + 2-oxoglutarate + O2 = (4R)-4-hydroxy-L-lysine + succinate + CO2. Functionally, alpha-ketoglutarate-dependent dioxygenase that in vitro catalyzes the regio- and stereoselective hydroxylation of L-lysine, leading to (4R)-4-hydroxy-L-lysine. This chain is L-lysine 4-hydroxylase, found in Flavobacterium sp. (strain CF136).